The following is a 118-amino-acid chain: Transcriptional regulator WhiB4 (118 aa).

The 4Fe-4S Wbl-type domain occupies 36–92; it reads LCRTTDPDELFVRGAAQRKAAVICRHCPVMQECAADALDNKVEFGVWGGMTERQRRA. C37, C59, C62, and C68 together coordinate [4Fe-4S] cluster. Disulfide bonds link C37/C68 and C59/C62.

It belongs to the WhiB family. It depends on [4Fe-4S] cluster as a cofactor. In terms of processing, the Fe-S cluster can be nitrosylated by nitric oxide (NO). Post-translationally, upon Fe-S cluster removal intramolecular disulfide bonds are formed.

Its subcellular location is the cytoplasm. Its function is as follows. Acts as a transcriptional regulator. Probably redox-responsive. The apo- but not holo-form probably binds DNA. The sequence is that of Transcriptional regulator WhiB4 (whiB4) from Mycobacterium tuberculosis (strain CDC 1551 / Oshkosh).